Here is a 510-residue protein sequence, read N- to C-terminus: Rab proteins geranylgeranyltransferase component A 1 (510 aa).

It belongs to the Rab GDI family. May interact with rab-5, rab-7 and rab-11. Does not interact with rab-3, rab-27 and rab-10. As to expression, expressed in several neurons including head neurons, motor neurons located in the ventral nerve cord, HSN and CAN neurons, and tail neurons, and in muscles such as body-wall, pharyngeal, intestinal and anal sphincter. Also expressed in seam cells, the hypodermis and the intestine.

The protein resides in the cytoplasm. In terms of biological role, substrate-binding subunit of the Rab geranylgeranyltransferase (GGTase) complex. Binds unprenylated Rab proteins and presents the substrate peptide to the catalytic component B and remains bound to it after the geranylgeranyl transfer reaction. The component A is thought to be regenerated by transferring its prenylated Rab back to the donor membrane. Plays a role in neurotransmitter release from presynaptic terminals at neuromuscular junctions. Positively regulates the function of rab-27 in synaptic transmission most likely through mediating rab-27 prenylation. This Caenorhabditis elegans protein is Rab proteins geranylgeranyltransferase component A 1.